Reading from the N-terminus, the 271-residue chain is Aminoglycoside 3'-phosphotransferase (271 aa).

The active-site Proton acceptor is the Asp198.

Belongs to the aminoglycoside phosphotransferase family.

The enzyme catalyses kanamycin A + ATP = kanamycin 3'-phosphate + ADP + H(+). Functionally, resistance to kanamycin and structurally-related aminoglycosides, including amikacin. This is Aminoglycoside 3'-phosphotransferase from Salmonella typhimurium.